Consider the following 216-residue polypeptide: UPF0598 protein C8orf82 (216 aa).

The protein belongs to the UPF0598 family.

The chain is UPF0598 protein C8orf82 (C8orf82) from Homo sapiens (Human).